The sequence spans 65 residues: Large ribosomal subunit protein uL30 (65 aa).

It belongs to the universal ribosomal protein uL30 family. Part of the 50S ribosomal subunit.

This chain is Large ribosomal subunit protein uL30, found in Mesorhizobium japonicum (strain LMG 29417 / CECT 9101 / MAFF 303099) (Mesorhizobium loti (strain MAFF 303099)).